Consider the following 210-residue polypeptide: Oxygen-insensitive NADPH nitroreductase (210 aa).

G150 to G155 contributes to the NADP(+) binding site.

Belongs to the nitroreductase family.

In terms of biological role, reduction of a variety of nitroaromatic compounds using NADPH as source of reducing equivalents; two electrons are transferred. Capable of reducing metronidazole; inactive RdxA renders the bacterium resistant to this compound. The reduction of metronidazole generates hydroxylamine, a potent mutagen and bactericide. The sequence is that of Oxygen-insensitive NADPH nitroreductase (rdxA) from Helicobacter pylori (strain ATCC 700392 / 26695) (Campylobacter pylori).